Reading from the N-terminus, the 186-residue chain is Lipid A acyltransferase PagP (186 aa).

An N-terminal signal peptide occupies residues 1-25; that stretch reads MNVSKYVAIFSFVFIQLISVGKVFA. Active-site residues include His58, Asp101, and Ser102.

It belongs to the lipid A palmitoyltransferase family. Homodimer.

It localises to the cell outer membrane. It carries out the reaction a lipid A + a 1,2-diacyl-sn-glycero-3-phosphocholine = a hepta-acyl lipid A + a 2-acyl-sn-glycero-3-phosphocholine. It catalyses the reaction a lipid IVA + a 1,2-diacyl-sn-glycero-3-phosphocholine = a lipid IVB + a 2-acyl-sn-glycero-3-phosphocholine. The catalysed reaction is a lipid IIA + a 1,2-diacyl-sn-glycero-3-phosphocholine = a lipid IIB + a 2-acyl-sn-glycero-3-phosphocholine. Its function is as follows. Transfers a fatty acid residue from the sn-1 position of a phospholipid to the N-linked hydroxyfatty acid chain on the proximal unit of lipid A or its precursors. In Shigella flexneri serotype X (strain 2002017), this protein is Lipid A acyltransferase PagP.